The following is a 107-amino-acid chain: Large ribosomal subunit protein bL21 (107 aa).

This sequence belongs to the bacterial ribosomal protein bL21 family. As to quaternary structure, part of the 50S ribosomal subunit. Contacts protein L20.

Functionally, this protein binds to 23S rRNA in the presence of protein L20. The sequence is that of Large ribosomal subunit protein bL21 from Chlamydia muridarum (strain MoPn / Nigg).